Here is a 145-residue protein sequence, read N- to C-terminus: Cytochrome b (145 aa).

The chain crosses the membrane as a helical span at residues 38–58; it reads FFALHFLLPFVLAALVIMHLI. His-42 and His-56 together coordinate heme b. Residue His-61 participates in a ubiquinone binding. The helical transmembrane segment at 85 to 105 threads the bilayer; the sequence is FVFKDLVTVFIFFIVLSVFVF.

It belongs to the cytochrome b family. As to quaternary structure, fungal cytochrome b-c1 complex contains 10 subunits; 3 respiratory subunits, 2 core proteins and 5 low-molecular weight proteins. Cytochrome b-c1 complex is a homodimer. It depends on heme b as a cofactor.

The protein resides in the mitochondrion inner membrane. Component of the ubiquinol-cytochrome c reductase complex (complex III or cytochrome b-c1 complex) that is part of the mitochondrial respiratory chain. The b-c1 complex mediates electron transfer from ubiquinol to cytochrome c. Contributes to the generation of a proton gradient across the mitochondrial membrane that is then used for ATP synthesis. In Aspergillus fumigatus (Neosartorya fumigata), this protein is Cytochrome b (cob).